Reading from the N-terminus, the 156-residue chain is Endoribonuclease YbeY (156 aa).

Residues H122, H126, and H132 each contribute to the Zn(2+) site.

The protein belongs to the endoribonuclease YbeY family. Zn(2+) is required as a cofactor.

It localises to the cytoplasm. Its function is as follows. Single strand-specific metallo-endoribonuclease involved in late-stage 70S ribosome quality control and in maturation of the 3' terminus of the 16S rRNA. The chain is Endoribonuclease YbeY from Bacillus cereus (strain G9842).